The primary structure comprises 361 residues: Putative pumilio homolog 22 (361 aa).

The 344-residue stretch at 5 to 348 (RGYDLASQVL…NIVAIIDSET (344 aa)) folds into the PUM-HD domain. 2 Pumilio repeats span residues 27-63 (HITYRHLLVLSSDDNGCVILKKVITIADDFLKDEFLD) and 64-103 (LIAQHAHSLSMHDLGISLIQHVLELDFTKKTTQDDKRLHE). One copy of the Pumilio 3; degenerate repeat lies at 104-131 (LMAEFDEVLSTSVTADVDKLHKLASKLM). The Pumilio 4 repeat unit spans residues 132–167 (LDSDLFFEFVITRRGSLMIQIILGKSEEVDQVILAG). Residues 168 to 205 (VKQRFIDVTTNFYGYRIMIQTIKVFKKRGDLKVYDQIL) form a Pumilio 5; degenerate repeat. Residues 206–243 (RLIGVHALYLTKDPDMGNKTFQHAINLHHQDCTTFIAC) form a Pumilio 6; degenerate repeat. Pumilio repeat units lie at residues 244 to 284 (GLQS…EIVK) and 285 to 319 (CDEDTLVRLATDEYGNNILKKFLALAKEHKEDFFG).

It is found in the cytoplasm. Its function is as follows. Sequence-specific RNA-binding protein that regulates translation and mRNA stability by binding the 3'-UTR of target mRNAs. The sequence is that of Putative pumilio homolog 22 (APUM22) from Arabidopsis thaliana (Mouse-ear cress).